We begin with the raw amino-acid sequence, 122 residues long: NADPH-dependent 7-cyano-7-deazaguanine reductase (122 aa).

The active-site Thioimide intermediate is the Cys34. The active-site Proton donor is Asp41. Substrate-binding positions include 56-58 and 75-76; these read VEL and HE.

Belongs to the GTP cyclohydrolase I family. QueF type 1 subfamily.

It localises to the cytoplasm. It carries out the reaction 7-aminomethyl-7-carbaguanine + 2 NADP(+) = 7-cyano-7-deazaguanine + 2 NADPH + 3 H(+). It participates in tRNA modification; tRNA-queuosine biosynthesis. Its function is as follows. Catalyzes the NADPH-dependent reduction of 7-cyano-7-deazaguanine (preQ0) to 7-aminomethyl-7-deazaguanine (preQ1). This Anaeromyxobacter dehalogenans (strain 2CP-C) protein is NADPH-dependent 7-cyano-7-deazaguanine reductase.